We begin with the raw amino-acid sequence, 225 residues long: Heptaprenylglyceryl phosphate synthase (225 aa).

A sn-glycerol 1-phosphate-binding site is contributed by lysine 6. The Mg(2+) site is built by aspartate 8 and threonine 34. Sn-glycerol 1-phosphate is bound by residues 153-158 (YIEYSG), glycine 183, and 203-204 (GN).

It belongs to the GGGP/HepGP synthase family. Group I subfamily. As to quaternary structure, homodimer. Mg(2+) serves as cofactor.

It catalyses the reaction sn-glycerol 1-phosphate + all-trans-heptaprenyl diphosphate = 3-heptaprenyl-sn-glycero-1-phosphate + diphosphate. It functions in the pathway membrane lipid metabolism; glycerophospholipid metabolism. Its function is as follows. Prenyltransferase that catalyzes in vivo the transfer of the heptaprenyl moiety of heptaprenyl pyrophosphate (HepPP; 35 carbon atoms) to the C3 hydroxyl of sn-glycerol-1-phosphate (G1P), producing heptaprenylglyceryl phosphate (HepGP). This reaction is an ether-bond-formation step in the biosynthesis of archaea-type G1P-based membrane lipids found in Bacillales. This chain is Heptaprenylglyceryl phosphate synthase, found in Listeria welshimeri serovar 6b (strain ATCC 35897 / DSM 20650 / CCUG 15529 / CIP 8149 / NCTC 11857 / SLCC 5334 / V8).